The chain runs to 456 residues: Cysteine--tRNA ligase (456 aa).

Cysteine 28 contacts Zn(2+). A 'HIGH' region motif is present at residues 30–40 (ITVYDHCHLGH). The Zn(2+) site is built by cysteine 209, histidine 234, and glutamate 238. The short motif at 266 to 270 (KMAKS) is the 'KMSKS' region element. Residue lysine 269 participates in ATP binding.

It belongs to the class-I aminoacyl-tRNA synthetase family. Monomer. Zn(2+) is required as a cofactor.

The protein resides in the cytoplasm. The enzyme catalyses tRNA(Cys) + L-cysteine + ATP = L-cysteinyl-tRNA(Cys) + AMP + diphosphate. The polypeptide is Cysteine--tRNA ligase (Legionella pneumophila (strain Corby)).